A 643-amino-acid polypeptide reads, in one-letter code: Phosphatidylinositol-3,5-bisphosphate 3-phosphatase MTMR2 (643 aa).

2 stretches are compositionally biased toward polar residues: residues 1–12 and 23–40; these read MEKSSSCESLGS and DSLSSASTSHSENSVHTK. Residues 1–56 form a disordered region; that stretch reads MEKSSSCESLGSQPAAARPPSVDSLSSASTSHSENSVHTKSASVVSSDSISTSADN. Phosphoserine occurs at positions 6 and 9. Over residues 41–55 the composition is skewed to low complexity; it reads SASVVSSDSISTSAD. Ser58 carries the phosphoserine modification. Positions 68–139 constitute a GRAM domain; that stretch reads NKLAEMEEPP…GVINRVEKIG (72 aa). The 376-residue stretch at 205-580 folds into the Myotubularin phosphatase domain; it reads GWKLYDPLLE…RHLELWVGYY (376 aa). Residues Asn330, Asn355, and Ile356 each coordinate a 1,2-diacyl-sn-glycero-3-phospho-(1D-myo-inositol-3,5-bisphosphate). A 1,2-diacyl-sn-glycero-3-phospho-(1D-myo-inositol-3-phosphate)-binding residues include Asn330, Asn355, and Ile356. The active-site Phosphocysteine intermediate is the Cys417. A 1,2-diacyl-sn-glycero-3-phospho-(1D-myo-inositol-3,5-bisphosphate) is bound by residues Ser418, Asp419, Gly420, Trp421, Asp422, Arg423, Arg459, and Arg463. Ser418, Asp419, Gly420, Trp421, Asp422, and Arg423 together coordinate a 1,2-diacyl-sn-glycero-3-phospho-(1D-myo-inositol-3-phosphate). Arg463 contacts a 1,2-diacyl-sn-glycero-3-phospho-(1D-myo-inositol-3-phosphate). Residues 593–627 are a coiled coil; the sequence is IHNRYKELLAKRAELQKKVEELQREISNRSTSSSE. A disordered region spans residues 615 to 643; sequence QREISNRSTSSSERASSPAQCVTPVQTVV. Low complexity predominate over residues 620-631; the sequence is NRSTSSSERASS. Residues 632-643 are compositionally biased toward polar residues; that stretch reads PAQCVTPVQTVV.

This sequence belongs to the protein-tyrosine phosphatase family. Non-receptor class myotubularin subfamily. In terms of assembly, homodimer (via coiled-coil domain). Heterotetramer consisting of one MTMR2 dimer and one SBF2/MTMR13 dimer; specifically in peripheral nerves stabilizes SBF2/MTMR13 at the membranes and increases MTMR2 catalytic activity towards phosphatidylinositol 3,5-bisphosphate and to a lesser extent towards phosphatidylinositol 3-phosphate. Heterodimer with SBF1/MTMR5; acts as an adapter for the phosphatase MTMR2 to regulate MTMR2 catalytic activity and subcellular location. Heterodimer with MTMR12. In terms of processing, phosphorylation at Ser-58 decreases MTMR2 localization to endocytic vesicular structures.

Its subcellular location is the cytoplasm. The protein resides in the early endosome membrane. The protein localises to the perinuclear region. It localises to the cell projection. It is found in the axon. Its subcellular location is the endosome membrane. The enzyme catalyses a 1,2-diacyl-sn-glycero-3-phospho-(1D-myo-inositol-3,5-bisphosphate) + H2O = a 1,2-diacyl-sn-glycero-3-phospho-(1D-myo-inositol-5-phosphate) + phosphate. It carries out the reaction a 1,2-diacyl-sn-glycero-3-phospho-(1D-myo-inositol-3-phosphate) + H2O = a 1,2-diacyl-sn-glycero-3-phospho-(1D-myo-inositol) + phosphate. The catalysed reaction is 1,2-dioctanoyl-sn-glycero-3-phospho-(1-D-myo-inositol-3-phosphate) + H2O = 1,2-dioctanoyl-sn-glycero-3-phospho-(1D-myo-inositol) + phosphate. It catalyses the reaction 1,2-dioctanoyl-sn-glycero-3-phospho-(1D-myo-inositol-3,5-bisphosphate) + H2O = 1,2-dioctanoyl-sn-glycero-3-phospho-(1D-myo-inositol-5-phosphate) + phosphate. Its function is as follows. Lipid phosphatase that specifically dephosphorylates the D-3 position of phosphatidylinositol 3-phosphate and phosphatidylinositol 3,5-bisphosphate, generating phosphatidylinositol and phosphatidylinositol 5-phosphate. Regulates the level of these phosphoinositides critical for various biological processes including autophagy initiation and autophagosome maturation. The sequence is that of Phosphatidylinositol-3,5-bisphosphate 3-phosphatase MTMR2 from Pongo abelii (Sumatran orangutan).